Consider the following 467-residue polypeptide: MPSSAQNVGIKALEIYFPSRYVPQTELETFLGASAGKYTIGLGQQNMSFCDDREDLYSLALTAVSSLLRKYAIDPNTIGRLEVGTETLLDKAKSCKTVLMQLFGDNTDIEGVDTYNACYGGTNALFNAVNWIESSSWDGRDAIVVAGDIALYETPAARPTGGAGCVAMLIGPDAPLVLEPVRGSCMKHVYDFYKAYFKSEYPLVDGQFSNTCYLGALDACYQRYQAKQRARQAAKTNGTAISNGHQGSFLDTFDYFAFHAPNCKLVAKGYGRLLFNDFKLESGSFDEVPAQVREADFAASLTDKALEKLCVSLTKERFVQRVEPSLTAPTNCGNMYTASVYAGLISLISNVPSDRLQDKRIGMFSYGSGLASTLFSFRVKGDTTEMARKIGLQDRLSARTAVSPEFYDQMCKLREKAYQQRNYTPEGSVESLAPGTYFLVHVDDAYRRKYDMKPYLSMCEDRHEQAV.

(3S)-3-hydroxy-3-methylglutaryl-CoA is bound at residue Ala-35. Glu-86 functions as the Proton donor/acceptor in the catalytic mechanism. 7 residues coordinate (3S)-3-hydroxy-3-methylglutaryl-CoA: Cys-118, Thr-160, Ser-209, His-259, Lys-268, Asn-334, and Ser-368. Cys-118 (acyl-thioester intermediate) is an active-site residue. The active-site Proton donor/acceptor is the His-259.

This sequence belongs to the thiolase-like superfamily. HMG-CoA synthase family.

It catalyses the reaction acetoacetyl-CoA + acetyl-CoA + H2O = (3S)-3-hydroxy-3-methylglutaryl-CoA + CoA + H(+). Its pathway is metabolic intermediate biosynthesis; (R)-mevalonate biosynthesis; (R)-mevalonate from acetyl-CoA: step 2/3. Its function is as follows. Hydroxymethylglutaryl-CoA synthase; part of the first module of ergosterol biosynthesis pathway that includes the early steps of the pathway, conserved across all eukaryotes, and which results in the formation of mevalonate from acetyl-coenzyme A (acetyl-CoA). Erg13A and erg13B condense acetyl-CoA with acetoacetyl-CoA to form hydroxymethylglutaryl-CoA (HMG-CoA). The first module starts with the action of the cytosolic acetyl-CoA acetyltransferase erg10B that catalyzes the formation of acetoacetyl-CoA. The hydroxymethylglutaryl-CoA synthases erg13A and erg13B then condense acetyl-CoA with acetoacetyl-CoA to form HMG-CoA. The rate-limiting step of the early module is the reduction to mevalonate by the 3-hydroxy-3-methylglutaryl-coenzyme A (HMG-CoA) reductases hmg1 and hmg2. Mevalonate is also a precursor for the extracellular siderophore triacetylfusarinine C (TAFC). The chain is Hydroxymethylglutaryl-CoA synthase erg13A from Aspergillus fumigatus (strain ATCC MYA-4609 / CBS 101355 / FGSC A1100 / Af293) (Neosartorya fumigata).